Consider the following 314-residue polypeptide: Malate dehydrogenase (314 aa).

Residues Gly-11–Gly-16 and Asp-35 each bind NAD(+). Residues Arg-84 and Arg-90 each coordinate substrate. Residues Asn-97 and Ile-120 to Asn-122 contribute to the NAD(+) site. Asn-122 and Arg-153 together coordinate substrate. The Proton acceptor role is filled by His-177.

The protein belongs to the LDH/MDH superfamily. MDH type 3 family.

The enzyme catalyses (S)-malate + NAD(+) = oxaloacetate + NADH + H(+). Its function is as follows. Catalyzes the reversible oxidation of malate to oxaloacetate. The polypeptide is Malate dehydrogenase (Rickettsia conorii (strain ATCC VR-613 / Malish 7)).